The following is a 250-amino-acid chain: Kallikrein-9 (250 aa).

The signal sequence occupies residues 1–15 (MKLGLLCALLSLLAG). In terms of domain architecture, Peptidase S1 spans 23-249 (AIGAEECRPN…YLDWIQEIME (227 aa)). Disulfide bonds link Cys29–Cys164, Cys48–Cys64, Cys136–Cys238, Cys143–Cys210, Cys175–Cys189, and Cys200–Cys225. Catalysis depends on charge relay system residues His63 and Asp111. 2 N-linked (GlcNAc...) asparagine glycosylation sites follow: Asn131 and Asn166. Ser204 functions as the Charge relay system in the catalytic mechanism. Residue Asn211 is glycosylated (N-linked (GlcNAc...) asparagine).

It belongs to the peptidase S1 family. Kallikrein subfamily. Skin, thymus, trachea, cerebellum and spinal cord.

It is found in the secreted. This Homo sapiens (Human) protein is Kallikrein-9 (KLK9).